A 122-amino-acid polypeptide reads, in one-letter code: Large ribosomal subunit protein bL12 (122 aa).

This sequence belongs to the bacterial ribosomal protein bL12 family. As to quaternary structure, homodimer. Part of the ribosomal stalk of the 50S ribosomal subunit. Forms a multimeric L10(L12)X complex, where L10 forms an elongated spine to which 2 to 4 L12 dimers bind in a sequential fashion. Binds GTP-bound translation factors.

Its function is as follows. Forms part of the ribosomal stalk which helps the ribosome interact with GTP-bound translation factors. Is thus essential for accurate translation. In Staphylococcus haemolyticus (strain JCSC1435), this protein is Large ribosomal subunit protein bL12.